A 246-amino-acid chain; its full sequence is 3-deoxy-manno-octulosonate cytidylyltransferase (246 aa).

The protein belongs to the KdsB family.

The protein localises to the cytoplasm. It carries out the reaction 3-deoxy-alpha-D-manno-oct-2-ulosonate + CTP = CMP-3-deoxy-beta-D-manno-octulosonate + diphosphate. It functions in the pathway nucleotide-sugar biosynthesis; CMP-3-deoxy-D-manno-octulosonate biosynthesis; CMP-3-deoxy-D-manno-octulosonate from 3-deoxy-D-manno-octulosonate and CTP: step 1/1. The protein operates within bacterial outer membrane biogenesis; lipopolysaccharide biosynthesis. Functionally, activates KDO (a required 8-carbon sugar) for incorporation into bacterial lipopolysaccharide in Gram-negative bacteria. This chain is 3-deoxy-manno-octulosonate cytidylyltransferase, found in Myxococcus xanthus (strain DK1622).